A 312-amino-acid polypeptide reads, in one-letter code: Probable carboxylesterase 7 (312 aa).

M1 carries the N-acetylmethionine modification. Positions H75–G77 match the Involved in the stabilization of the negatively charged intermediate by the formation of the oxyanion hole motif. Residues S159, D255, and H287 contribute to the active site.

Belongs to the 'GDXG' lipolytic enzyme family. As to expression, expressed in leaves, stems, flowers and siliques.

The enzyme catalyses a carboxylic ester + H2O = an alcohol + a carboxylate + H(+). In terms of biological role, carboxylesterase acting on esters with varying acyl chain length. The protein is Probable carboxylesterase 7 (CXE7) of Arabidopsis thaliana (Mouse-ear cress).